The primary structure comprises 698 residues: Probable microcin-H47 secretion/processing ATP-binding protein MchF (698 aa).

The Peptidase C39 domain occupies Gln-26–Val-145. Residue Cys-32 is part of the active site. 5 helical membrane passes run Gly-33–Leu-53, Leu-90–Val-110, Thr-289–Tyr-311, Leu-315–Tyr-337, and Leu-397–Leu-417. The region spanning Leu-176 to Ile-458 is the ABC transmembrane type-1 domain. An ABC transporter domain is found at Leu-492–Ile-698. Gly-526–Thr-533 is an ATP binding site.

It belongs to the ABC transporter superfamily.

The protein resides in the cell membrane. Its function is as follows. Probably involved, in conjunction with MchE, in the secretion of microcin H47. This is Probable microcin-H47 secretion/processing ATP-binding protein MchF (mchF) from Escherichia coli.